The following is an 88-amino-acid chain: Large ribosomal subunit protein bL27 (88 aa).

A disordered region spans residues 1–24 (MAHKKAGGSSRNGRDSAGQRRGVK).

This sequence belongs to the bacterial ribosomal protein bL27 family.

This Syntrophobacter fumaroxidans (strain DSM 10017 / MPOB) protein is Large ribosomal subunit protein bL27.